Reading from the N-terminus, the 61-residue chain is uncharacterized protein (61 aa).

Its subcellular location is the mitochondrion. This is an uncharacterized protein from Marchantia polymorpha (Common liverwort).